The following is a 543-amino-acid chain: Glutamyl-tRNA(Gln) amidotransferase subunit B-1, chloroplastic/mitochondrial (543 aa).

The segment at 1-47 (MIRAGGPSPSPRGRRAGPIRLPRRAPSSTPTRAKTEEKASADASSRT) is disordered. Positions 12–23 (RGRRAGPIRLPR) are enriched in basic residues.

Belongs to the GatB/GatE family. GatB subfamily. In terms of assembly, subunit of the heterotrimeric GatCAB amidotransferase (AdT) complex, composed of A, B and C subunits.

The protein localises to the mitochondrion. Its subcellular location is the plastid. The protein resides in the chloroplast. It catalyses the reaction L-glutamyl-tRNA(Gln) + L-glutamine + ATP + H2O = L-glutaminyl-tRNA(Gln) + L-glutamate + ADP + phosphate + H(+). Its function is as follows. Allows the formation of correctly charged Gln-tRNA(Gln) through the transamidation of misacylated Glu-tRNA(Gln) in chloroplasts and mitochondria. The reaction takes place in the presence of glutamine and ATP through an activated gamma-phospho-Glu-tRNA(Gln). This chain is Glutamyl-tRNA(Gln) amidotransferase subunit B-1, chloroplastic/mitochondrial, found in Micromonas commoda (strain RCC299 / NOUM17 / CCMP2709) (Picoplanktonic green alga).